The primary structure comprises 484 residues: MALIQNPNMKHAPFLRNRSPQQTLFIPYTLSLPISYQNPKRLKTANSSSSSSLLAPVILNSPVASSSPPPIYCAPKFPCSSGAATVPLSRVWREIQGCNNWKDLIEPLNPLLQQEITRYGNLVSTCYKAFDLDPNSKRYLNCKYGKQTLLKETEIDQPEDYQVTKYIYATPDININISPIQNEMNRRARWVGYVAASSDDSVKRLGRRDIVVTFRGTVTNPEWLANFMSSLTPARFHPHNPRLDVKVESGFLSLYTSDESESKFGLESCRQQLLSEISRLMNKYKGEEMSITLAGHSMGSSLAQLLAYDIAELGLNRRIGKGDIPVTVFSFAGPRVGNLEFKKRCEELGVKVLRITNVNDPVTKLPGVLFNENFRVLGGFYELPWSCSCYVHVGVELTLDFFDVQNISCVHDLQTYIDLLNQRRTNSRSVDSDEDEDSDNVALEFLKTNGEKMMFLKRQRMMYWSNAVDLLFSFSNHMSYCNIF.

A chloroplast-targeting transit peptide spans 1–63; sequence MALIQNPNMK…LAPVILNSPV (63 aa). The GXSXG motif lies at 295–299; it reads GHSMG. Catalysis depends on Ser-297, which acts as the Acyl-ester intermediate. Catalysis depends on charge relay system residues Asp-360 and His-411.

The protein belongs to the AB hydrolase superfamily. Lipase family. Ubiquitous. Highest expression in flowers and leaves.

It is found in the plastid. The protein resides in the chloroplast. It localises to the plastoglobule. The catalysed reaction is a 1,2-diacyl-3-O-[alpha-D-galactosyl-(1-&gt;6)-beta-D-galactosyl]-sn-glycerol + H2O = acyl-3-O-[alpha-D-galactosyl-(1-&gt;6)-beta-D-galactosyl]-sn-glycerol + a fatty acid + H(+). It catalyses the reaction a 1,2-diacyl-3-O-(beta-D-galactosyl)-sn-glycerol + H2O = an acyl-3-O-(beta-D-galactosyl)-sn-glycerol + a fatty acid + H(+). Its function is as follows. Acylhydrolase that catalyzes the hydrolysis of phosphatidylcholine at the sn-1 position. Has a strong galactolipase activity toward monogalactosyldiacylglycerol (MGDG) and digalactosyldiacylglycerol (DGDG). Low triacylglycerol (TAG) lipase activity. Plays a role in plant growth and in leaf senescence. This chain is Phospholipase A1-Ialpha2, chloroplastic, found in Arabidopsis thaliana (Mouse-ear cress).